The sequence spans 280 residues: Phosphatidylglycerol--prolipoprotein diacylglyceryl transferase (280 aa).

3 helical membrane passes run 15–35 (IFSI…IFAL), 60–80 (FIGL…PVFF), and 90–110 (IWEG…VLLF). Arg-138 contributes to the a 1,2-diacyl-sn-glycero-3-phospho-(1'-sn-glycerol) binding site. 2 consecutive transmembrane segments (helical) span residues 217–237 (MPFG…RIFL) and 257–277 (GQLL…NIYV).

It belongs to the Lgt family.

It localises to the cell membrane. The catalysed reaction is L-cysteinyl-[prolipoprotein] + a 1,2-diacyl-sn-glycero-3-phospho-(1'-sn-glycerol) = an S-1,2-diacyl-sn-glyceryl-L-cysteinyl-[prolipoprotein] + sn-glycerol 1-phosphate + H(+). The protein operates within protein modification; lipoprotein biosynthesis (diacylglyceryl transfer). Functionally, catalyzes the transfer of the diacylglyceryl group from phosphatidylglycerol to the sulfhydryl group of the N-terminal cysteine of a prolipoprotein, the first step in the formation of mature lipoproteins. The chain is Phosphatidylglycerol--prolipoprotein diacylglyceryl transferase from Buchnera aphidicola subsp. Baizongia pistaciae (strain Bp).